The primary structure comprises 208 residues: Small ribosomal subunit protein uS4 (208 aa).

The S4 RNA-binding domain maps to Thr-98–Gln-161.

Belongs to the universal ribosomal protein uS4 family. In terms of assembly, part of the 30S ribosomal subunit. Contacts protein S5. The interaction surface between S4 and S5 is involved in control of translational fidelity.

In terms of biological role, one of the primary rRNA binding proteins, it binds directly to 16S rRNA where it nucleates assembly of the body of the 30S subunit. Functionally, with S5 and S12 plays an important role in translational accuracy. The chain is Small ribosomal subunit protein uS4 from Maridesulfovibrio salexigens (strain ATCC 14822 / DSM 2638 / NCIMB 8403 / VKM B-1763) (Desulfovibrio salexigens).